A 477-amino-acid chain; its full sequence is Methionine aminopeptidase 2 (477 aa).

Residues 1 to 121 (MAGVEEAASC…TDPPSVPICD (121 aa)) form a disordered region. Ala-2 is modified (N-acetylalanine). The span at 36–46 (KKKKRKKKKSK) shows a compositional bias: basic residues. Phosphoserine is present on Ser-45. Over residues 54–78 (EPDKEAGASVDEVTRQLERQALEEK) the composition is skewed to basic and acidic residues. At Ser-62 the chain carries Phosphoserine; alternate. Ser-62 is a glycosylation site (O-linked (GlcNAc) serine; alternate). The segment covering 79 to 91 (EKDDDDEDGDGDG) has biased composition (acidic residues). Residues 96–108 (GKKKKKKKKKRGP) show a composition bias toward basic residues. His-230 provides a ligand contact to substrate. Residues Asp-250, Asp-261, and His-330 each contribute to the a divalent metal cation site. Substrate is bound at residue His-338. Residues Glu-363 and Glu-458 each contribute to the a divalent metal cation site.

This sequence belongs to the peptidase M24A family. Methionine aminopeptidase eukaryotic type 2 subfamily. In terms of assembly, binds EIF2S1 at low magnesium concentrations. Interacts strongly with the eIF-2 gamma-subunit EIF2S3. Co(2+) serves as cofactor. Requires Zn(2+) as cofactor. Mn(2+) is required as a cofactor. It depends on Fe(2+) as a cofactor. In terms of processing, contains approximately 12 O-linked N-acetylglucosamine (GlcNAc) residues. O-glycosylation is required for EIF2S1 binding.

The protein resides in the cytoplasm. The enzyme catalyses Release of N-terminal amino acids, preferentially methionine, from peptides and arylamides.. Cotranslationally removes the N-terminal methionine from nascent proteins. The N-terminal methionine is often cleaved when the second residue in the primary sequence is small and uncharged (Met-Ala-, Cys, Gly, Pro, Ser, Thr, or Val). Its function is as follows. Protects eukaryotic initiation factor EIF2S1 from translation-inhibiting phosphorylation by inhibitory kinases such as EIF2AK2/PKR and EIF2AK1/HCR. Plays a critical role in the regulation of protein synthesis. This is Methionine aminopeptidase 2 from Bos taurus (Bovine).